The following is a 154-amino-acid chain: MTKHVEIFTDGSCLGNPGPGGYGIVLRYKQTEKTLAKGYTLTTNNRMEMLAAVVALQTLKEPCQVTLTTDSQYVRQGITQWIHNWKKRGWKTADKKPVKNADLWQALDKETARHKVDWHWVKGHAGHRENEICDELARTAAENPTEEDTGYQAS.

The RNase H type-1 domain maps to 1-142 (MTKHVEIFTD…CDELARTAAE (142 aa)). Mg(2+)-binding residues include Asp-10, Glu-48, Asp-70, and Asp-134.

It belongs to the RNase H family. As to quaternary structure, monomer. Mg(2+) serves as cofactor.

The protein resides in the cytoplasm. The enzyme catalyses Endonucleolytic cleavage to 5'-phosphomonoester.. Its function is as follows. Endonuclease that specifically degrades the RNA of RNA-DNA hybrids. This Vibrio campbellii (strain ATCC BAA-1116) protein is Ribonuclease H.